The sequence spans 472 residues: Phenylalanine--tRNA ligase, mitochondrial (472 aa).

Substrate is bound by residues Ser157–Gln160, Arg179, Gln186–Tyr188, and Gln193–Glu195. An N6-acetyllysine modification is found at Lys202. Substrate-binding residues include Glu287 and Phe312. An FDX-ACB domain is found at Ser379–Arg471.

It belongs to the class-II aminoacyl-tRNA synthetase family. In terms of assembly, monomer. As to expression, mainly expressed in the Purkinje cell of cerebellum.

The protein resides in the mitochondrion matrix. It localises to the mitochondrion. It catalyses the reaction tRNA(Phe) + L-phenylalanine + ATP = L-phenylalanyl-tRNA(Phe) + AMP + diphosphate + H(+). Its function is as follows. Is responsible for the charging of tRNA(Phe) with phenylalanine in mitochondrial translation. To a lesser extent, also catalyzes direct attachment of m-Tyr (an oxidized version of Phe) to tRNA(Phe), thereby opening the way for delivery of the misacylated tRNA to the ribosome and incorporation of ROS-damaged amino acid into proteins. In Rattus norvegicus (Rat), this protein is Phenylalanine--tRNA ligase, mitochondrial (Fars2).